Here is a 121-residue protein sequence, read N- to C-terminus: Large ribosomal subunit protein uL24 (121 aa).

Belongs to the universal ribosomal protein uL24 family. Part of the 50S ribosomal subunit.

Its function is as follows. One of two assembly initiator proteins, it binds directly to the 5'-end of the 23S rRNA, where it nucleates assembly of the 50S subunit. Located at the polypeptide exit tunnel on the outside of the subunit. This Pyrococcus abyssi (strain GE5 / Orsay) protein is Large ribosomal subunit protein uL24.